Here is a 104-residue protein sequence, read N- to C-terminus: MGGYKGIKADGGKVDQAKQLAAKTAKDIEACQKQTQQLAEYIEGSDWEGQFANKVKDVLLIMAKFQEELVQPIADHQKAIDNLSQNLAKYDTLSIKQGLDRVNP.

It belongs to the WXG100 family. As to quaternary structure, homodimer. When mixed with EsxA does not form heterodimers.

It is found in the secreted. Functionally, virulence factor that is important for the establishment of infection in the host. EsxB is required for EsxA synthesis as well as secretion. Mediates together with EsxA the release of S.aureus from the host cell. Also inhibits host cytokine production and thus modulates dendritic cell-mediated immunity. This Staphylococcus aureus (strain MSSA476) protein is Type VII secretion system extracellular protein B.